Here is a 31-residue protein sequence, read N- to C-terminus: GLFLDTLKGAAKDVAGKLEGLKCKITGCKLP.

Cys-23 and Cys-28 are oxidised to a cystine.

The protein belongs to the frog skin active peptide (FSAP) family. Ranatuerin subfamily. As to expression, expressed by the skin glands.

Its subcellular location is the secreted. Antibacterial activity against Gram-positive bacterium S.aureus (MIC=60 uM). Shows no detectable hemolytic activity towards human erythrocytes. This Aquarana catesbeiana (American bullfrog) protein is Ranatuerin-2.